Consider the following 543-residue polypeptide: Protein DETOXIFICATION 47, chloroplastic (543 aa).

A chloroplast-targeting transit peptide spans 1-30 (MLIKSQRLTLFSPLLSKTRRIPVNSHQTLV). Residues 55-94 (VIRRRIKLERVTRNCVRIDREIDEEEEEEEKERGDLVKQS) adopt a coiled-coil conformation. A run of 12 helical transmembrane segments spans residues 107–127 (GPAM…TVVI), 135–155 (LAAL…FMFL), 181–201 (VLLF…RLFG), 228–248 (GLAW…LGMK), 256–276 (ALAA…LFLG), 278–298 (GIAG…YMMM), 319–339 (LWKI…KIAF), 342–362 (FIIY…QVMA), 406–426 (IIGA…PGLF), 443–463 (LLIP…LEGT), 472–492 (FVSS…MFVT), and 497–517 (GLLG…GLYL).

This sequence belongs to the multi antimicrobial extrusion (MATE) (TC 2.A.66.1) family. In terms of tissue distribution, preferentially expressed in the epidermal cells.

The protein resides in the plastid. The protein localises to the chloroplast membrane. Its function is as follows. Functions as a multidrug and toxin extrusion transporter in the export of salicylic acid (SA) from the chloroplast to the cytoplasm. Plays an essential function in plant defense via the pathogen-induced salicylic acid (SA) accumulation. Also acts as a key component of the Age-related resistance (ARR) pathway. The chain is Protein DETOXIFICATION 47, chloroplastic from Arabidopsis thaliana (Mouse-ear cress).